The following is a 344-amino-acid chain: Ubiquitin-associated domain-containing protein 2 (344 aa).

Residues 1–34 (MFTSTGSNGLYKAPLSKSLLLVPSAISILLTLLF) form the signal peptide. The Extracellular segment spans residues 35–91 (QHYQKFFAYNLQAIKEDFQIWRLVCGRVICLDLKDTFCSSLLIYNFRIFERRYGSRK). Residues 92 to 111 (FSSFLLGAWTLSALFDLLLV) form a helical membrane-spanning segment. At 112-123 (EAAQYVFGITIN) the chain is on the cytoplasmic side. A helical membrane pass occupies residues 124 to 142 (SLPSGFLGPVFALFVPFYC). The Extracellular portion of the chain corresponds to 143 to 162 (SIPRVQVTQVLGYFSITNKT). The N-linked (GlcNAc...) asparagine glycan is linked to Asn-160. A helical membrane pass occupies residues 163–183 (LVYILGLQLLTSGSYIWILAL). Topologically, residues 184-344 (SGLISGICYN…NVATNFLLQH (161 aa)) are cytoplasmic. Residues 284 to 307 (RHNENYQDHHPSDQDTPPPTEVSE) form a disordered region. Basic and acidic residues predominate over residues 286–296 (NENYQDHHPSD). Residues 304 to 344 (EVSEEQVARLMEMGFSRGDALEALRASNNDLNVATNFLLQH) enclose the UBA domain.

Its subcellular location is the endoplasmic reticulum membrane. Restricts trafficking of FAF2 from the endoplasmic reticulum to lipid droplets. May negatively regulate the canonical Wnt signaling pathway in the lymphocytes. The chain is Ubiquitin-associated domain-containing protein 2 (UBAC2) from Gallus gallus (Chicken).